Consider the following 314-residue polypeptide: tRNA dimethylallyltransferase 2 (314 aa).

8 to 15 contacts ATP; sequence GPTGSGKS. Residue 10-15 coordinates substrate; it reads TGSGKS.

It belongs to the IPP transferase family. As to quaternary structure, monomer. It depends on Mg(2+) as a cofactor.

It carries out the reaction adenosine(37) in tRNA + dimethylallyl diphosphate = N(6)-dimethylallyladenosine(37) in tRNA + diphosphate. Its function is as follows. Catalyzes the transfer of a dimethylallyl group onto the adenine at position 37 in tRNAs that read codons beginning with uridine, leading to the formation of N6-(dimethylallyl)adenosine (i(6)A). The chain is tRNA dimethylallyltransferase 2 from Mycobacterium marinum (strain ATCC BAA-535 / M).